The sequence spans 87 residues: MSDAAVPPKKASPKKASPKKAAPKKAVAKKTPAKKTAKKPAVKKPAAKKRAAPKKKPAAAKKAVTKSAKKHAAKKAPKKAVKKAPKK.

Positions 1–87 are disordered; sequence MSDAAVPPKK…KKAVKKAPKK (87 aa). Over residues 11–87 the composition is skewed to basic residues; the sequence is ASPKKASPKK…KKAVKKAPKK (77 aa).

Its subcellular location is the nucleus. The protein resides in the chromosome. The sequence is that of Histone H1.C6/H1.C9 from Trypanosoma cruzi.